The following is a 518-amino-acid chain: Serine/threonine-protein kinase PRR1 (518 aa).

Residue methionine 1 is modified to N-acetylmethionine. Residues methionine 1 to lysine 12 show a composition bias toward polar residues. The tract at residues methionine 1 to leucine 59 is disordered. Residues leucine 16–alanine 45 are compositionally biased toward basic and acidic residues. The span at threonine 47 to leucine 59 shows a compositional bias: polar residues. Serine 132 carries the phosphoserine modification. In terms of domain architecture, Protein kinase spans tryptophan 192–valine 508. ATP contacts are provided by residues isoleucine 198–valine 206 and lysine 225. The Proton acceptor role is filled by aspartate 354.

Belongs to the protein kinase superfamily. CAMK Ser/Thr protein kinase family. NIM1 subfamily.

Its subcellular location is the cytoplasm. It carries out the reaction L-seryl-[protein] + ATP = O-phospho-L-seryl-[protein] + ADP + H(+). It catalyses the reaction L-threonyl-[protein] + ATP = O-phospho-L-threonyl-[protein] + ADP + H(+). Protein kinase that functions as a regulator in the pheromone-induced mating pathway downstream of mitogen-activated protein kinase (MAPK) FUS3. Diminishes transcriptional induction of genes in response to pheromone signaling. The sequence is that of Serine/threonine-protein kinase PRR1 (PRR1) from Saccharomyces cerevisiae (strain ATCC 204508 / S288c) (Baker's yeast).